The sequence spans 372 residues: Chaperone protein DnaJ (372 aa).

The region spanning D5–G69 is the J domain. The CR-type zinc-finger motif lies at G139–R221. Positions 152, 155, 169, 172, 195, 198, 209, and 212 each coordinate Zn(2+). CXXCXGXG motif repeat units follow at residues C152–G159, C169–G176, C195–G202, and C209–G216.

This sequence belongs to the DnaJ family. In terms of assembly, homodimer. Requires Zn(2+) as cofactor.

Its subcellular location is the cytoplasm. Functionally, participates actively in the response to hyperosmotic and heat shock by preventing the aggregation of stress-denatured proteins and by disaggregating proteins, also in an autonomous, DnaK-independent fashion. Unfolded proteins bind initially to DnaJ; upon interaction with the DnaJ-bound protein, DnaK hydrolyzes its bound ATP, resulting in the formation of a stable complex. GrpE releases ADP from DnaK; ATP binding to DnaK triggers the release of the substrate protein, thus completing the reaction cycle. Several rounds of ATP-dependent interactions between DnaJ, DnaK and GrpE are required for fully efficient folding. Also involved, together with DnaK and GrpE, in the DNA replication of plasmids through activation of initiation proteins. In Mycoplasma mycoides subsp. mycoides SC (strain CCUG 32753 / NCTC 10114 / PG1), this protein is Chaperone protein DnaJ.